The chain runs to 82 residues: Conotoxin C11GB (82 aa).

Residues 1-22 (MKLTCVMIVAVLFLTAWTVVTA) form the signal peptide. A propeptide spanning residues 23 to 53 (EPHSSNVLENLYLKAHHEMENPEASKLNTRD) is cleaved from the precursor. 3 cysteine pairs are disulfide-bonded: cysteine 55/cysteine 72, cysteine 62/cysteine 76, and cysteine 71/cysteine 80.

The protein belongs to the conotoxin O1 superfamily. Expressed by the venom duct.

Its subcellular location is the secreted. The protein is Conotoxin C11GB of Conus vexillum (Flag cone).